The chain runs to 744 residues: Polyadenylate-binding protein, cytoplasmic and nuclear (744 aa).

A compositionally biased stretch (polar residues) spans 1–11 (MSEVANSTSPV). A disordered region spans residues 1–42 (MSEVANSTSPVQDGADANGAQINTNVPAASGDAPTPTTAAQQ). A compositionally biased stretch (low complexity) spans 33 to 42 (APTPTTAAQQ). RRM domains follow at residues 48–126 (ASLY…WSQR), 136–213 (GNVF…HHIP), 229–306 (TNIY…RAQK), and 332–462 (VNLY…LAQR). Disordered regions lie at residues 368-411 (EEKK…AGDK), 527-550 (GRGA…NAQQ), 607-651 (IAGG…PGVD), and 723-744 (VKNK…EEKA). A compositionally biased stretch (basic and acidic residues) spans 376-397 (KEVKEEKKEDEKKEDEEAKEGS). Composition is skewed to gly residues over residues 527 to 545 (GRGA…GRGG), 609 to 632 (GGPG…GGRG), and 640 to 649 (PQGGRPGGPG). In terms of domain architecture, PABC spans 647–724 (GPGVDMSVLS…AMSVYDEYVK (78 aa)).

Belongs to the polyadenylate-binding protein type-1 family.

The protein resides in the cytoplasm. Its subcellular location is the nucleus. Binds the poly(A) tail of mRNA. Appears to be an important mediator of the multiple roles of the poly(A) tail in mRNA biogenesis, stability and translation. In the nucleus, involved in both mRNA cleavage and polyadenylation. Is also required for efficient mRNA export to the cytoplasm. Acts in concert with a poly(A)-specific nuclease (PAN) to affect poly(A) tail shortening, which may occur concomitantly with either nucleocytoplasmic mRNA transport or translational initiation. In the cytoplasm, stimulates translation initiation and regulates mRNA decay through translation termination-coupled poly(A) shortening, probably mediated by PAN. The sequence is that of Polyadenylate-binding protein, cytoplasmic and nuclear (PAB1) from Phaeosphaeria nodorum (strain SN15 / ATCC MYA-4574 / FGSC 10173) (Glume blotch fungus).